The sequence spans 624 residues: RQC trigger complex subunit CUE3 (624 aa).

The region spanning 316-359 (VNEEQLSALMELFPQFSKYQLSQTLLAYDNNIELVTNKIFEDPT) is the CUE domain. 3 disordered regions span residues 366-390 (REPAEEEVEPVSDGDNASFTEELSI), 435-469 (RDDTYDEADVNRSDPSKRIGLQEDEESYDTKDDSN), and 546-624 (SKTG…NNAI). Serine 377 is modified (phosphoserine). Basic and acidic residues-rich tracts occupy residues 443 to 455 (DVNRSDPSKRIGL) and 568 to 589 (EQAKQKKSENIKKHEPQSTEQK). Positions 590–617 (KRQHAKNEKRKGARANHNRKKGHDKKLA) are enriched in basic residues.

In terms of assembly, component of the RQT (ribosome quality control trigger) complex, composed of SLH1, CUE3, and RQT4. Interacts with ubiquitin; the interaction is direct. Interacts with SLH1. Interacts with RQT4. Interacts with HEL2. Associates with translating ribosomes.

Its subcellular location is the cytoplasm. Involved in activation of the ribosome quality control (RQC) pathway, a pathway that degrades nascent peptide chains during problematic translation. Specifically recognizes and binds RPS20/uS10 ubiquitinated by HEL2, promoting recruitment of the RQT (ribosome quality control trigger) complex on stalled ribosomes, followed by disassembly of stalled ribosomes. This is RQC trigger complex subunit CUE3 (CUE3) from Saccharomyces cerevisiae (strain ATCC 204508 / S288c) (Baker's yeast).